The following is a 156-amino-acid chain: dCTP deaminase (156 aa).

Residues 79–84 (RSTFAR), D95, Q124, and Y138 contribute to the dCTP site.

Belongs to the dCTP deaminase family. As to quaternary structure, homotrimer.

The catalysed reaction is dCTP + H2O + H(+) = dUTP + NH4(+). It functions in the pathway pyrimidine metabolism; dUMP biosynthesis; dUMP from dCTP (dUTP route): step 1/2. Its function is as follows. Catalyzes the deamination of dCTP to dUTP. This chain is dCTP deaminase, found in Thermococcus sibiricus (strain DSM 12597 / MM 739).